Here is a 91-residue protein sequence, read N- to C-terminus: Non-specific lipid-transfer protein 1 (91 aa).

Cystine bridges form between C4/C51, C14/C28, C29/C74, and C49/C88.

The protein belongs to the plant LTP family. Detected in seeds (at protein level).

Its function is as follows. Plant non-specific lipid-transfer proteins transfer phospholipids as well as galactolipids across membranes. May play a role in wax or cutin deposition in the cell walls of expanding epidermal cells and certain secretory tissues. The polypeptide is Non-specific lipid-transfer protein 1 (Carum carvi (Caraway)).